Consider the following 261-residue polypeptide: Cytochrome c oxidase subunit 3 (261 aa).

At 1–15 the chain is on the mitochondrial matrix side; the sequence is MTHQTHAYHMVNPSP. Residues 16–34 traverse the membrane as a helical segment; it reads WPLTGALSALLMTSGLAMW. Residues 35 to 40 are Mitochondrial intermembrane-facing; the sequence is FHFNSP. The helical transmembrane segment at 41–66 threads the bilayer; it reads SLLLIGLVTNTLTMYQWWRDIVREGT. Over 67–72 the chain is Mitochondrial matrix; that stretch reads FQGHHT. Residues 73–105 form a helical membrane-spanning segment; that stretch reads PIVQKGLRYGMILFIISEVFFFAGFFWAFYHSS. The Mitochondrial intermembrane segment spans residues 106–128; it reads LAPTPELGGCWPPTGINPLNPLE. Residues 129-152 traverse the membrane as a helical segment; sequence VPLLNTSVLLASGVSITWAHHSLM. The Mitochondrial matrix portion of the chain corresponds to 153–155; it reads EGN. Residues 156 to 183 form a helical membrane-spanning segment; that stretch reads RKNMQQALAITILLGIYFTLLQASEYYE. The Mitochondrial intermembrane segment spans residues 184–190; that stretch reads TSFTISD. The helical transmembrane segment at 191–223 threads the bilayer; it reads GVYGSTFFMATGFHGLHVIIGSTFLTVCLLRQF. Topologically, residues 224–232 are mitochondrial matrix; it reads NFHFTSNHH. Residues 233 to 256 form a helical membrane-spanning segment; that stretch reads FGFEAAAWYWHFVDVVWLFLYVSI. Residues 257-261 lie on the Mitochondrial intermembrane side of the membrane; the sequence is YWWGS.

Belongs to the cytochrome c oxidase subunit 3 family. In terms of assembly, component of the cytochrome c oxidase (complex IV, CIV), a multisubunit enzyme composed of 14 subunits. The complex is composed of a catalytic core of 3 subunits MT-CO1, MT-CO2 and MT-CO3, encoded in the mitochondrial DNA, and 11 supernumerary subunits COX4I, COX5A, COX5B, COX6A, COX6B, COX6C, COX7A, COX7B, COX7C, COX8 and NDUFA4, which are encoded in the nuclear genome. The complex exists as a monomer or a dimer and forms supercomplexes (SCs) in the inner mitochondrial membrane with NADH-ubiquinone oxidoreductase (complex I, CI) and ubiquinol-cytochrome c oxidoreductase (cytochrome b-c1 complex, complex III, CIII), resulting in different assemblies (supercomplex SCI(1)III(2)IV(1) and megacomplex MCI(2)III(2)IV(2)).

Its subcellular location is the mitochondrion inner membrane. The enzyme catalyses 4 Fe(II)-[cytochrome c] + O2 + 8 H(+)(in) = 4 Fe(III)-[cytochrome c] + 2 H2O + 4 H(+)(out). Functionally, component of the cytochrome c oxidase, the last enzyme in the mitochondrial electron transport chain which drives oxidative phosphorylation. The respiratory chain contains 3 multisubunit complexes succinate dehydrogenase (complex II, CII), ubiquinol-cytochrome c oxidoreductase (cytochrome b-c1 complex, complex III, CIII) and cytochrome c oxidase (complex IV, CIV), that cooperate to transfer electrons derived from NADH and succinate to molecular oxygen, creating an electrochemical gradient over the inner membrane that drives transmembrane transport and the ATP synthase. Cytochrome c oxidase is the component of the respiratory chain that catalyzes the reduction of oxygen to water. Electrons originating from reduced cytochrome c in the intermembrane space (IMS) are transferred via the dinuclear copper A center (CU(A)) of subunit 2 and heme A of subunit 1 to the active site in subunit 1, a binuclear center (BNC) formed by heme A3 and copper B (CU(B)). The BNC reduces molecular oxygen to 2 water molecules using 4 electrons from cytochrome c in the IMS and 4 protons from the mitochondrial matrix. This chain is Cytochrome c oxidase subunit 3 (MT-CO3), found in Oryctolagus cuniculus (Rabbit).